The sequence spans 116 residues: uncharacterized protein (116 aa).

The tract at residues 97-116 (AKGKGNEGREEAEEASGKSK) is disordered. Basic and acidic residues predominate over residues 100–116 (KGNEGREEAEEASGKSK).

This sequence belongs to the UPF0440 family.

This is an uncharacterized protein from Pyrococcus horikoshii (strain ATCC 700860 / DSM 12428 / JCM 9974 / NBRC 100139 / OT-3).